The primary structure comprises 376 residues: UDP-N-acetylglucosamine--N-acetylmuramyl-(pentapeptide) pyrophosphoryl-undecaprenol N-acetylglucosamine transferase (376 aa).

UDP-N-acetyl-alpha-D-glucosamine-binding positions include 11–13 (TGG), Asn117, Arg160, Ser208, and Gln310.

The protein belongs to the glycosyltransferase 28 family. MurG subfamily.

The protein resides in the cell inner membrane. It catalyses the reaction di-trans,octa-cis-undecaprenyl diphospho-N-acetyl-alpha-D-muramoyl-L-alanyl-D-glutamyl-meso-2,6-diaminopimeloyl-D-alanyl-D-alanine + UDP-N-acetyl-alpha-D-glucosamine = di-trans,octa-cis-undecaprenyl diphospho-[N-acetyl-alpha-D-glucosaminyl-(1-&gt;4)]-N-acetyl-alpha-D-muramoyl-L-alanyl-D-glutamyl-meso-2,6-diaminopimeloyl-D-alanyl-D-alanine + UDP + H(+). It participates in cell wall biogenesis; peptidoglycan biosynthesis. Its function is as follows. Cell wall formation. Catalyzes the transfer of a GlcNAc subunit on undecaprenyl-pyrophosphoryl-MurNAc-pentapeptide (lipid intermediate I) to form undecaprenyl-pyrophosphoryl-MurNAc-(pentapeptide)GlcNAc (lipid intermediate II). This is UDP-N-acetylglucosamine--N-acetylmuramyl-(pentapeptide) pyrophosphoryl-undecaprenol N-acetylglucosamine transferase from Rickettsia peacockii (strain Rustic).